The sequence spans 265 residues: Signal peptidase I (265 aa).

At 1–19 the chain is on the cytoplasmic side; the sequence is MQIDTKTNTNKTTAQEWKS. A helical membrane pass occupies residues 20–40; the sequence is FAFVVCIALLIRILIMEPFTV. The Periplasmic segment spans residues 41–265; it reads PTGSMKATIL…IFRNLYNTDE (225 aa). Catalysis depends on residues S44 and K107.

The protein belongs to the peptidase S26 family.

It is found in the cell inner membrane. It catalyses the reaction Cleavage of hydrophobic, N-terminal signal or leader sequences from secreted and periplasmic proteins.. The sequence is that of Signal peptidase I (lepB) from Rickettsia canadensis (strain McKiel).